A 122-amino-acid polypeptide reads, in one-letter code: Large ribosomal subunit protein uL14 (122 aa).

This sequence belongs to the universal ribosomal protein uL14 family. Part of the 50S ribosomal subunit. Forms a cluster with proteins L3 and L19. In the 70S ribosome, L14 and L19 interact and together make contacts with the 16S rRNA in bridges B5 and B8.

Binds to 23S rRNA. Forms part of two intersubunit bridges in the 70S ribosome. The protein is Large ribosomal subunit protein uL14 of Shewanella denitrificans (strain OS217 / ATCC BAA-1090 / DSM 15013).